A 348-amino-acid polypeptide reads, in one-letter code: NADH-quinone oxidoreductase subunit H (348 aa).

8 consecutive transmembrane segments (helical) span residues 7-27 (IWLLPLLIIVGKTLLLLVVLL), 82-102 (GVFLLAPFVSATLALSTWAVI), 115-135 (VGLLYILAISSLEVYGVIMGG), 161-181 (IGFVLVTVILVSGSLDLTTIV), 199-219 (FLDWNWLVLFPMFIIFFISAL), 251-271 (LFFLGEYVAIVLMCALTTILF), 287-307 (VPGIIWFVLKVCFVFFWFAMV), and 322-342 (LGWKVFLPFSLAMVVITATFL).

Belongs to the complex I subunit 1 family. As to quaternary structure, NDH-1 is composed of 14 different subunits. Subunits NuoA, H, J, K, L, M, N constitute the membrane sector of the complex.

It is found in the cell inner membrane. It catalyses the reaction a quinone + NADH + 5 H(+)(in) = a quinol + NAD(+) + 4 H(+)(out). Functionally, NDH-1 shuttles electrons from NADH, via FMN and iron-sulfur (Fe-S) centers, to quinones in the respiratory chain. The immediate electron acceptor for the enzyme in this species is believed to be ubiquinone. Couples the redox reaction to proton translocation (for every two electrons transferred, four hydrogen ions are translocated across the cytoplasmic membrane), and thus conserves the redox energy in a proton gradient. This subunit may bind ubiquinone. This Bartonella quintana (strain Toulouse) (Rochalimaea quintana) protein is NADH-quinone oxidoreductase subunit H.